Reading from the N-terminus, the 392-residue chain is Chorismate synthase (392 aa).

Residues Arg39 and Arg45 each coordinate NADP(+). FMN contacts are provided by residues 128-130, 248-249, Gly300, 315-319, and Arg341; these read RSS, QA, and KPIPT.

This sequence belongs to the chorismate synthase family. As to quaternary structure, homotetramer. FMNH2 serves as cofactor.

It catalyses the reaction 5-O-(1-carboxyvinyl)-3-phosphoshikimate = chorismate + phosphate. The protein operates within metabolic intermediate biosynthesis; chorismate biosynthesis; chorismate from D-erythrose 4-phosphate and phosphoenolpyruvate: step 7/7. Catalyzes the anti-1,4-elimination of the C-3 phosphate and the C-6 proR hydrogen from 5-enolpyruvylshikimate-3-phosphate (EPSP) to yield chorismate, which is the branch point compound that serves as the starting substrate for the three terminal pathways of aromatic amino acid biosynthesis. This reaction introduces a second double bond into the aromatic ring system. The chain is Chorismate synthase from Trichlorobacter lovleyi (strain ATCC BAA-1151 / DSM 17278 / SZ) (Geobacter lovleyi).